The chain runs to 179 residues: Interferon lambda-4 (179 aa).

Positions 1–21 are cleaved as a signal peptide; it reads MRPSVWAAVAAGLWVLCTVIA. Residues 130 to 149 are disordered; sequence SSRKVPGAQKRRHKPRRADS.

It belongs to the lambda interferon family.

The protein localises to the cytoplasm. The protein resides in the secreted. In terms of biological role, cytokine that may trigger an antiviral response activating the JAK-STAT pathway and up-regulating specifically some interferon-stimulated genes. The sequence is that of Interferon lambda-4 (IFNL4) from Homo sapiens (Human).